Here is a 284-residue protein sequence, read N- to C-terminus: Four and a half LIM domains protein 5 (284 aa).

The C4-type zinc-finger motif lies at 8–32 (CQYCTASLLGKKYVLKDDNLYCISC). LIM zinc-binding domains lie at 39-100 (NYCE…ECSS), 101-160 (KCFH…KEFA), 161-220 (HYCN…LYAK), and 221-283 (KCAA…ADTD).

Interacts with CREM (via the third LIM domain). Interacts (via second LIM domain) with SPAG8.

The protein resides in the nucleus. Its function is as follows. May be involved in the regulation of spermatogenesis. Stimulates CREM transcriptional activity in a phosphorylation-independent manner. This chain is Four and a half LIM domains protein 5 (Fhl5), found in Rattus norvegicus (Rat).